The following is a 273-amino-acid chain: 2,3,4,5-tetrahydropyridine-2,6-dicarboxylate N-succinyltransferase (273 aa).

Belongs to the transferase hexapeptide repeat family.

The protein resides in the cytoplasm. The enzyme catalyses (S)-2,3,4,5-tetrahydrodipicolinate + succinyl-CoA + H2O = (S)-2-succinylamino-6-oxoheptanedioate + CoA. Its pathway is amino-acid biosynthesis; L-lysine biosynthesis via DAP pathway; LL-2,6-diaminopimelate from (S)-tetrahydrodipicolinate (succinylase route): step 1/3. This is 2,3,4,5-tetrahydropyridine-2,6-dicarboxylate N-succinyltransferase from Acinetobacter baumannii (strain SDF).